The chain runs to 279 residues: MKIAYLGPRGSFCSVVAEAAFKSEELYSYATILDVIEAYNEGECDFALVPIENSTEGTVNMSIDKIFHDSNAKVVAEFVLPISQNLLAVSKEQKIEHIYSHPQALAQTRVYLRKFYPQAQVEITESTSAAAEFVKNNPDLPAAAVANSFAAKMYDLEFIAENIQDLAGNSTRFWLLGKEKQSFDLNQTKDKVTLALTLPDNLPGALHKAISVFAWRDIDMTKIESRPLRTRLGQYFFIIDLENNATNSLKIPYALEELAGLGVNVRLLGNYSVYSLGEV.

The Prephenate dehydratase domain maps to 2–178; sequence KIAYLGPRGS…NSTRFWLLGK (177 aa). The ACT domain occupies 194–272; it reads LALTLPDNLP…VNVRLLGNYS (79 aa).

The enzyme catalyses prephenate + H(+) = 3-phenylpyruvate + CO2 + H2O. It functions in the pathway amino-acid biosynthesis; L-phenylalanine biosynthesis; phenylpyruvate from prephenate: step 1/1. This Lactococcus lactis subsp. cremoris (strain MG1363) protein is Prephenate dehydratase (pheA).